Consider the following 325-residue polypeptide: BTB/POZ domain-containing protein KCTD12 (325 aa).

Positions 1–28 are disordered; the sequence is MALADSTRGLPNGGGGGGGSGSSSSSAE. Ala2 carries the post-translational modification N-acetylalanine. Positions 11–21 are enriched in gly residues; sequence PNGGGGGGGSG. Tyr119 bears the Phosphotyrosine mark. Positions 129–202 are disordered; sequence LGAPQQPGPG…PLLTPSQSLD (74 aa). Phosphoserine is present on residues Ser151, Ser171, and Ser185. A Phosphothreonine modification is found at Thr196. Phosphoserine is present on Ser200.

In terms of assembly, interacts as a tetramer with GABBR1 and GABBR2. Present in a variety of fetal organs, with highest expression levels in the cochlea and brain and, in stark contrast, is detected only at extremely low levels in adult organs, such as brain and lung.

Its subcellular location is the presynaptic cell membrane. The protein resides in the postsynaptic cell membrane. Auxiliary subunit of GABA-B receptors that determine the pharmacology and kinetics of the receptor response. Increases agonist potency and markedly alter the G-protein signaling of the receptors by accelerating onset and promoting desensitization. The chain is BTB/POZ domain-containing protein KCTD12 (KCTD12) from Homo sapiens (Human).